A 227-amino-acid polypeptide reads, in one-letter code: Large ribosomal subunit protein uL3 (227 aa).

Belongs to the universal ribosomal protein uL3 family. As to quaternary structure, part of the 50S ribosomal subunit. Forms a cluster with proteins L14 and L19.

In terms of biological role, one of the primary rRNA binding proteins, it binds directly near the 3'-end of the 23S rRNA, where it nucleates assembly of the 50S subunit. This chain is Large ribosomal subunit protein uL3, found in Persephonella marina (strain DSM 14350 / EX-H1).